A 656-amino-acid chain; its full sequence is Squalene-hopene cyclase (656 aa).

One copy of the PFTB 1 repeat lies at 68 to 110; that stretch reads EQKIANYLRRCQSREHWGWPVYYGGEFNISASVQAYFALKMTG. The active-site Proton donor is the aspartate 396. PFTB repeat units follow at residues 417-459, 485-525, 533-582, and 591-634; these read LDRA…ALLD, IERG…NASG, VLKC…GLMA, and VKRG…QFFP.

Belongs to the terpene cyclase/mutase family.

The catalysed reaction is squalene = hop-22(29)-ene. It carries out the reaction squalene + H2O = hopan-22-ol. In terms of biological role, squalene cyclase that catalyzes the oxygen-independent cyclization of squalene into hopanoids, a class of cyclic triterpenoids including hop-22(29)-ene, hop-17(21)-ene, hop-21(22)-ene, and hopan-22-ol. This is Squalene-hopene cyclase from Schizosaccharomyces japonicus (strain yFS275 / FY16936) (Fission yeast).